We begin with the raw amino-acid sequence, 426 residues long: Serine hydroxymethyltransferase (426 aa).

(6S)-5,6,7,8-tetrahydrofolate contacts are provided by residues Leu-113 and 117–119 (GHL). An N6-(pyridoxal phosphate)lysine modification is found at Lys-222. Residue 363–365 (SAF) coordinates (6S)-5,6,7,8-tetrahydrofolate.

The protein belongs to the SHMT family. In terms of assembly, homodimer. It depends on pyridoxal 5'-phosphate as a cofactor.

The protein localises to the cytoplasm. The catalysed reaction is (6R)-5,10-methylene-5,6,7,8-tetrahydrofolate + glycine + H2O = (6S)-5,6,7,8-tetrahydrofolate + L-serine. It participates in one-carbon metabolism; tetrahydrofolate interconversion. Its pathway is amino-acid biosynthesis; glycine biosynthesis; glycine from L-serine: step 1/1. Catalyzes the reversible interconversion of serine and glycine with tetrahydrofolate (THF) serving as the one-carbon carrier. This reaction serves as the major source of one-carbon groups required for the biosynthesis of purines, thymidylate, methionine, and other important biomolecules. Also exhibits THF-independent aldolase activity toward beta-hydroxyamino acids, producing glycine and aldehydes, via a retro-aldol mechanism. In Bacteroides thetaiotaomicron (strain ATCC 29148 / DSM 2079 / JCM 5827 / CCUG 10774 / NCTC 10582 / VPI-5482 / E50), this protein is Serine hydroxymethyltransferase.